Consider the following 357-residue polypeptide: uncharacterized protein (357 aa).

One copy of the HEAT repeat lies at 173–211; the sequence is VLPILEKLMQDESLYVRKSVANNLNDISKTHPHLLRKVA.

This is an uncharacterized protein from Bacillus subtilis (strain 168).